The primary structure comprises 373 residues: Queuine tRNA-ribosyltransferase (373 aa).

The Proton acceptor role is filled by Asp90. Substrate contacts are provided by residues 90–94, Asp144, Gln193, and Gly220; that span reads DSGGF. Residues 251-257 are RNA binding; the sequence is GVGTPED. Asp270 functions as the Nucleophile in the catalytic mechanism. The interval 275 to 279 is RNA binding; important for wobble base 34 recognition; that stretch reads TRNAR. Zn(2+) contacts are provided by Cys308, Cys310, Cys313, and His339.

It belongs to the queuine tRNA-ribosyltransferase family. In terms of assembly, homodimer. Within each dimer, one monomer is responsible for RNA recognition and catalysis, while the other monomer binds to the replacement base PreQ1. Zn(2+) is required as a cofactor.

The enzyme catalyses 7-aminomethyl-7-carbaguanine + guanosine(34) in tRNA = 7-aminomethyl-7-carbaguanosine(34) in tRNA + guanine. It functions in the pathway tRNA modification; tRNA-queuosine biosynthesis. Its function is as follows. Catalyzes the base-exchange of a guanine (G) residue with the queuine precursor 7-aminomethyl-7-deazaguanine (PreQ1) at position 34 (anticodon wobble position) in tRNAs with GU(N) anticodons (tRNA-Asp, -Asn, -His and -Tyr). Catalysis occurs through a double-displacement mechanism. The nucleophile active site attacks the C1' of nucleotide 34 to detach the guanine base from the RNA, forming a covalent enzyme-RNA intermediate. The proton acceptor active site deprotonates the incoming PreQ1, allowing a nucleophilic attack on the C1' of the ribose to form the product. After dissociation, two additional enzymatic reactions on the tRNA convert PreQ1 to queuine (Q), resulting in the hypermodified nucleoside queuosine (7-(((4,5-cis-dihydroxy-2-cyclopenten-1-yl)amino)methyl)-7-deazaguanosine). The protein is Queuine tRNA-ribosyltransferase of Campylobacter lari (strain RM2100 / D67 / ATCC BAA-1060).